Consider the following 571-residue polypeptide: MRTSQFLLATQKETPSDAVVVSHQLMLRAGMIRKLASGLYTWLPMGLRVLRKVEAIVREEMDAAGALEILMPGIQPAELWQESGRWEQYGPELMRLVDRHNREFCLGPTHEEVITDLARNELNSYKQLPINMYQIQTKFRDEIRPRFGLMRGREFVMKDAYSFHADHESLQVTYDRMHLAYSNIFTRLGLKFRPVEADNGSIGGAGSHEFHVLAESGEDDIVFSDGSDYAANIEKAEAIPREKTRPAATEELRLIDTPNTKTIAQLVEGFGLPIEKTVKTLVVHAAEEGKLIALIIRGDHELNEIKASQLEQVANPLVMASEAELRDAIGAGAGSLGPLNLPLPCIIDRSVELMSDFSVGANIDDKHYFGVNWERDLPVPTVADLRNVVAGDPSPDGKGTLEIKRGIEVGHIFQLGTKYSEAMKCQVLGENGKPVNLAMGCYGIGVSRVVAAAIEQNSDENGIIWNDTLAPFQIALVPLRYETDAVREATDKLYADLTAAGFEVLLDDRDKKTSPGIKFADMELIGIPHRIVVSDRGLAEGNLEYKSRTESQPQAIAVADVLSFIQGKVNR.

It belongs to the class-II aminoacyl-tRNA synthetase family. ProS type 1 subfamily. As to quaternary structure, homodimer.

It is found in the cytoplasm. The catalysed reaction is tRNA(Pro) + L-proline + ATP = L-prolyl-tRNA(Pro) + AMP + diphosphate. In terms of biological role, catalyzes the attachment of proline to tRNA(Pro) in a two-step reaction: proline is first activated by ATP to form Pro-AMP and then transferred to the acceptor end of tRNA(Pro). As ProRS can inadvertently accommodate and process non-cognate amino acids such as alanine and cysteine, to avoid such errors it has two additional distinct editing activities against alanine. One activity is designated as 'pretransfer' editing and involves the tRNA(Pro)-independent hydrolysis of activated Ala-AMP. The other activity is designated 'posttransfer' editing and involves deacylation of mischarged Ala-tRNA(Pro). The misacylated Cys-tRNA(Pro) is not edited by ProRS. This chain is Proline--tRNA ligase, found in Pseudomonas syringae pv. syringae (strain B728a).